A 434-amino-acid chain; its full sequence is Vi polysaccharide export inner-membrane protein VexD (434 aa).

A compositionally biased stretch (basic and acidic residues) spans methionine 1–proline 50. The segment at methionine 1–aspartate 58 is disordered. Helical transmembrane passes span leucine 84–serine 104 and tryptophan 409–isoleucine 429.

This sequence belongs to the BexC/CtrB/KpsE family.

The protein resides in the cell inner membrane. In terms of biological role, may form an ATP-driven capsule polysaccharide export apparatus, in association with the VexA, VexB and VexC proteins. This Salmonella typhi protein is Vi polysaccharide export inner-membrane protein VexD (vexD).